Here is a 78-residue protein sequence, read N- to C-terminus: MEVKIFRVKGTFEKGGKKFRFTKEYRALKPEDVRELVFSDIGSKHRVKRAKIFIESIEEIEPVEAENLVVKRLSLELA.

The protein belongs to the eukaryotic ribosomal protein eL20 family. In terms of assembly, part of the 50S ribosomal subunit. Binds 23S rRNA.

The chain is Large ribosomal subunit protein eL20 from Thermococcus sibiricus (strain DSM 12597 / MM 739).